Here is a 154-residue protein sequence, read N- to C-terminus: uncharacterized protein (154 aa).

A helical transmembrane segment spans residues 23 to 43 (SAVALVTFAGAALSGVIPAIA).

It is found in the membrane. This is an uncharacterized protein from Mycobacterium tuberculosis (strain CDC 1551 / Oshkosh).